The chain runs to 474 residues: PRAME family member 13 (474 aa).

The LRR 1; degenerate repeat unit spans residues 97–124; that stretch reads RRKLQVLDLRDVDENFWARWPGAWALSC. The LRR 2; degenerate repeat unit spans residues 179 to 203; it reads HLCCSKLVNYLTPIKHLRKSLKIIY. One copy of the LRR 3; degenerate repeat lies at 204–230; sequence LNSIQELEIHNMSWPRLIRKLRCYLKE. The stretch at 231 to 265 is one LRR 4; degenerate repeat; it reads MKTLGKLVFSRCHHSTSDNELEGRLVTKFSSVFLG. LRR repeat units lie at residues 266 to 291, 292 to 323, 324 to 342, 348 to 375, and 376 to 400; these read LEHL…IRCL, QNPL…GYLK, HLNL…PLGA, AASL…GLSR, and CSQL…LLRH.

Belongs to the PRAME family.

This chain is PRAME family member 13, found in Homo sapiens (Human).